A 146-amino-acid chain; its full sequence is Large ribosomal subunit protein uL16 (146 aa).

It belongs to the universal ribosomal protein uL16 family. As to quaternary structure, part of the 50S ribosomal subunit.

In terms of biological role, binds 23S rRNA and is also seen to make contacts with the A and possibly P site tRNAs. The chain is Large ribosomal subunit protein uL16 from Lactobacillus helveticus (strain DPC 4571).